We begin with the raw amino-acid sequence, 460 residues long: Bifunctional protein GlmU (460 aa).

The pyrophosphorylase stretch occupies residues 1–232 (MAISAALILA…PDEIMGVNDR (232 aa)). UDP-N-acetyl-alpha-D-glucosamine-binding positions include 9–12 (LAAG), Lys-23, Gln-75, and 80–81 (GT). Asp-105 provides a ligand contact to Mg(2+). Positions 142, 157, 172, and 230 each coordinate UDP-N-acetyl-alpha-D-glucosamine. A Mg(2+)-binding site is contributed by Asn-230. Residues 233–253 (VQLAHAARVLRQRVNLQLMLA) are linker. Positions 254-460 (GVTLIDPDQT…GWCLKKRDNG (207 aa)) are N-acetyltransferase. Arg-336 and Lys-354 together coordinate UDP-N-acetyl-alpha-D-glucosamine. His-366 functions as the Proton acceptor in the catalytic mechanism. Residues Tyr-369 and Asn-380 each contribute to the UDP-N-acetyl-alpha-D-glucosamine site. Acetyl-CoA-binding positions include 389–390 (NY), Ser-408, Ala-426, and Arg-443.

This sequence in the N-terminal section; belongs to the N-acetylglucosamine-1-phosphate uridyltransferase family. It in the C-terminal section; belongs to the transferase hexapeptide repeat family. Homotrimer. Requires Mg(2+) as cofactor.

It localises to the cytoplasm. It catalyses the reaction alpha-D-glucosamine 1-phosphate + acetyl-CoA = N-acetyl-alpha-D-glucosamine 1-phosphate + CoA + H(+). The enzyme catalyses N-acetyl-alpha-D-glucosamine 1-phosphate + UTP + H(+) = UDP-N-acetyl-alpha-D-glucosamine + diphosphate. It participates in nucleotide-sugar biosynthesis; UDP-N-acetyl-alpha-D-glucosamine biosynthesis; N-acetyl-alpha-D-glucosamine 1-phosphate from alpha-D-glucosamine 6-phosphate (route II): step 2/2. Its pathway is nucleotide-sugar biosynthesis; UDP-N-acetyl-alpha-D-glucosamine biosynthesis; UDP-N-acetyl-alpha-D-glucosamine from N-acetyl-alpha-D-glucosamine 1-phosphate: step 1/1. It functions in the pathway bacterial outer membrane biogenesis; LPS lipid A biosynthesis. In terms of biological role, catalyzes the last two sequential reactions in the de novo biosynthetic pathway for UDP-N-acetylglucosamine (UDP-GlcNAc). The C-terminal domain catalyzes the transfer of acetyl group from acetyl coenzyme A to glucosamine-1-phosphate (GlcN-1-P) to produce N-acetylglucosamine-1-phosphate (GlcNAc-1-P), which is converted into UDP-GlcNAc by the transfer of uridine 5-monophosphate (from uridine 5-triphosphate), a reaction catalyzed by the N-terminal domain. This is Bifunctional protein GlmU from Trichlorobacter lovleyi (strain ATCC BAA-1151 / DSM 17278 / SZ) (Geobacter lovleyi).